The chain runs to 161 residues: 18.3 kDa class I heat shock protein (161 aa).

The 114-residue stretch at 48 to 161 (ETAAFANARI…KPQVKAINVY (114 aa)) folds into the sHSP domain.

This sequence belongs to the small heat shock protein (HSP20) family. In terms of assembly, forms oligomeric structures.

The protein resides in the cytoplasm. The sequence is that of 18.3 kDa class I heat shock protein (HSP18) from Oxybasis rubra (Red goosefoot).